Here is a 122-residue protein sequence, read N- to C-terminus: Small ribosomal subunit protein uS13 (122 aa).

The segment covering 95 to 116 (GLPVRGQKTKTNARTRKGRRKT) has biased composition (basic residues). A disordered region spans residues 95–122 (GLPVRGQKTKTNARTRKGRRKTVGAATK).

This sequence belongs to the universal ribosomal protein uS13 family. In terms of assembly, part of the 30S ribosomal subunit. Forms a loose heterodimer with protein S19. Forms two bridges to the 50S subunit in the 70S ribosome.

Functionally, located at the top of the head of the 30S subunit, it contacts several helices of the 16S rRNA. In the 70S ribosome it contacts the 23S rRNA (bridge B1a) and protein L5 of the 50S subunit (bridge B1b), connecting the 2 subunits; these bridges are implicated in subunit movement. Contacts the tRNAs in the A and P-sites. This chain is Small ribosomal subunit protein uS13, found in Campylobacter concisus (strain 13826).